The following is a 273-amino-acid chain: Dermonecrotic toxin LsaSicTox-alphaIB1bii (273 aa).

Residue His5 is part of the active site. Residues Glu25 and Asp27 each contribute to the Mg(2+) site. Residue His41 is the Nucleophile of the active site. Disulfide bonds link Cys45–Cys51 and Cys47–Cys190. Position 85 (Asp85) interacts with Mg(2+).

This sequence belongs to the arthropod phospholipase D family. Class II subfamily. The cofactor is Mg(2+). Expressed by the venom gland.

It localises to the secreted. The enzyme catalyses an N-(acyl)-sphingosylphosphocholine = an N-(acyl)-sphingosyl-1,3-cyclic phosphate + choline. The catalysed reaction is an N-(acyl)-sphingosylphosphoethanolamine = an N-(acyl)-sphingosyl-1,3-cyclic phosphate + ethanolamine. It carries out the reaction a 1-acyl-sn-glycero-3-phosphocholine = a 1-acyl-sn-glycero-2,3-cyclic phosphate + choline. It catalyses the reaction a 1-acyl-sn-glycero-3-phosphoethanolamine = a 1-acyl-sn-glycero-2,3-cyclic phosphate + ethanolamine. In terms of biological role, dermonecrotic toxins cleave the phosphodiester linkage between the phosphate and headgroup of certain phospholipids (sphingolipid and lysolipid substrates), forming an alcohol (often choline) and a cyclic phosphate. This toxin acts on sphingomyelin (SM). It may also act on ceramide phosphoethanolamine (CPE), lysophosphatidylcholine (LPC) and lysophosphatidylethanolamine (LPE), but not on lysophosphatidylserine (LPS), and lysophosphatidylglycerol (LPG). It acts by transphosphatidylation, releasing exclusively cyclic phosphate products as second products. Induces dermonecrosis, hemolysis, increased vascular permeability, edema, inflammatory response, and platelet aggregation. The chain is Dermonecrotic toxin LsaSicTox-alphaIB1bii from Loxosceles sabina (Tucson recluse spider).